A 694-amino-acid chain; its full sequence is Heat shock protein HSP 90-alpha (694 aa).

Phosphothreonine; by PRKDC occurs at positions 5 and 7. Positions 9–236 (DQPMEEEEVE…DKEVSDDEAK (228 aa)) are interaction with NR3C1. Asn51 contributes to the ATP binding site. N6-acetyllysine is present on residues Lys58 and Lys84. ATP-binding residues include Asp93, Lys112, and Phe138. Basic and acidic residues predominate over residues 228-241 (KEVSDDEAKQPDDK). Residues 228 to 275 (KEVSDDEAKQPDDKPEIEDVGSDEEEEEKKDGDIDQEELNKTKPIWTR) form a disordered region. 2 positions are modified to phosphoserine: Ser231 and Ser249. The segment covering 242 to 255 (PEIEDVGSDEEEEE) has biased composition (acidic residues). Over residues 256 to 268 (KKDGDIDQEELNK) the composition is skewed to basic and acidic residues. The interval 258–578 (DGDIDQEELN…TANMERIMKA (321 aa)) is interaction with NR3C1. The tract at residues 261–582 (IDQEELNKTK…ERIMKAQALR (322 aa)) is interaction with FNIP2 and TSC1. An interaction with FLCN and FNIP1 region spans residues 261–694 (IDQEELNKTK…DDTSRMEEVD (434 aa)). Tyr289 carries the phosphotyrosine modification. An ATP-binding site is contributed by Arg376. Lys419 is modified (N6-acetyllysine). Residue Ser429 is modified to Phosphoserine. The residue at position 434 (Lys434) is an N6-acetyllysine. The residue at position 452 (Ser452) is a Phosphoserine. Residue Lys465 is modified to N6-acetyllysine. The residue at position 468 (Tyr468) is a Phosphotyrosine. Lys547 carries the N6-acetyllysine modification. Position 560 is an S-nitrosocysteine (Cys560). The segment at 590–693 (MAAKKHLEVN…DDDTSRMEEV (104 aa)) is interaction with NR1D1. Residue Ser603 is modified to Phosphoserine. The tract at residues 644 to 694 (QTHANRIYRMIKLGLGIDEDDPTADDTAAAVTEEMPPLEGDDDTSRMEEVD) is required for homodimerization. A disordered region spans residues 662–694 (EDDPTADDTAAAVTEEMPPLEGDDDTSRMEEVD). The span at 668-677 (DDTAAAVTEE) shows a compositional bias: low complexity. A TPR repeat-binding motif is present at residues 685–694 (DDTSRMEEVD). Residues 690-694 (MEEVD) form an essential for interaction with SMYD3, TSC1 and STIP1/HOP region. The segment at 691-694 (EEVD) is essential for interaction with SGTA and TTC1.

Belongs to the heat shock protein 90 family. In terms of assembly, homodimer. Identified in NR3C1/GCR steroid receptor-chaperone complexes formed at least by NR3C1, HSP90AA1 and a variety of proteins containing TPR repeats such as FKBP4, FKBP5, PPID, PPP5C or STIP1. Forms a complex containing HSP90AA1, TSC1 and TSC2; TSC1 is required to recruit TCS2 to the complex. The closed form interacts (via the middle domain and TPR repeat-binding motif) with co-chaperone TSC1 (via C-terminus). Interacts with TOM34. Interacts with TERT; the interaction, together with PTGES3, is required for correct assembly and stabilization of the TERT holoenzyme complex. Interacts with CHORDC1 and DNAJC7. Interacts with STUB1 and UBE2N; may couple the chaperone and ubiquitination systems. Interacts (via TPR repeat-binding motif) with PPP5C (via TPR repeats); the interaction is direct and activates PPP5C phosphatase activity. Following LPS binding, may form a complex with CXCR4, GDF5 and HSPA8. Interacts with KSR1. Interacts with co-chaperone CDC37 (via C-terminus); the interaction inhibits HSP90AA1 ATPase activity. May interact with NWD1. Interacts with FNIP1 and FNIP2; the interaction inhibits HSP90AA1 ATPase activity. Interacts with co-chaperone AHSA1 (phosphorylated on 'Tyr-223'); the interaction activates HSP90AA1 ATPase activity and results in the dissociation of TSC1 from HSP90AA1. Interacts with FLCN in the presence of FNIP1. Interacts with HSP70, STIP1 and PTGES3. Interacts with SMYD3; this interaction enhances SMYD3 histone-lysine N-methyltransferase. Interacts with SGTA (via TPR repeats). Interacts with TTC1 (via TPR repeats). Interacts with HSF1 in an ATP-dependent manner. Interacts with MET; the interaction suppresses MET kinase activity. Interacts with ERBB2 in an ATP-dependent manner; the interaction suppresses ERBB2 kinase activity. Interacts with HIF1A, KEAP1 and RHOBTB2. Interacts with HSF1; this interaction is decreased in a IER5-dependent manner, promoting HSF1 accumulation in the nucleus, homotrimerization and DNA-binding activities. Interacts with STUB1 and SMAD3. Interacts with HSP90AB1; interaction is constitutive. Interacts with HECTD1 (via N-terminus). Interacts with NR3C1 (via domain NR LBD) and NR1D1 (via domain NR LBD). Interacts with NLPR12. Interacts with PDCL3. Interacts with TOMM70; the interaction is required for preprotein mitochondrial import. Interacts with TOMM70, IRF3 and TBK1; the interactions are direct and mediate the association of TOMM70 with IRF3 and TBK1. Forms a complex with ASL, ASS1 and NOS2; the complex regulates cell-autonomous L-arginine synthesis and citrulline recycling while channeling extracellular L-arginine to nitric oxide synthesis pathway. In terms of processing, ISGylated. S-nitrosylated; negatively regulates the ATPase activity and the activation of eNOS by HSP90AA1. Post-translationally, ubiquitinated via 'Lys-63'-linked polyubiquitination by HECTD1. Ubiquitination promotes translocation into the cytoplasm away from the membrane and secretory pathways.

The protein localises to the nucleus. It localises to the cytoplasm. Its subcellular location is the melanosome. The protein resides in the cell membrane. It is found in the mitochondrion. The catalysed reaction is ATP + H2O = ADP + phosphate + H(+). Its activity is regulated as follows. In the resting state, through the dimerization of its C-terminal domain, HSP90 forms a homodimer which is defined as the open conformation. Upon ATP-binding, the N-terminal domain undergoes significant conformational changes and comes in contact to form an active closed conformation. After HSP90 finishes its chaperoning tasks of assisting the proper folding, stabilization and activation of client proteins under the active state, ATP molecule is hydrolyzed to ADP which then dissociates from HSP90 and directs the protein back to the resting state. Co-chaperone TSC1 promotes ATP binding and inhibits HSP90AA1 ATPase activity. Binding to phosphorylated AHSA1 promotes HSP90AA1 ATPase activity. Inhibited by geldanamycin, Ganetespib (STA-9090) and SNX-2112. In terms of biological role, molecular chaperone that promotes the maturation, structural maintenance and proper regulation of specific target proteins involved for instance in cell cycle control and signal transduction. Undergoes a functional cycle that is linked to its ATPase activity which is essential for its chaperone activity. This cycle probably induces conformational changes in the client proteins, thereby causing their activation. Interacts dynamically with various co-chaperones that modulate its substrate recognition, ATPase cycle and chaperone function. Engages with a range of client protein classes via its interaction with various co-chaperone proteins or complexes, that act as adapters, simultaneously able to interact with the specific client and the central chaperone itself. Recruitment of ATP and co-chaperone followed by client protein forms a functional chaperone. After the completion of the chaperoning process, properly folded client protein and co-chaperone leave HSP90 in an ADP-bound partially open conformation and finally, ADP is released from HSP90 which acquires an open conformation for the next cycle. Plays a critical role in mitochondrial import, delivers preproteins to the mitochondrial import receptor TOMM70. Apart from its chaperone activity, it also plays a role in the regulation of the transcription machinery. HSP90 and its co-chaperones modulate transcription at least at three different levels. In the first place, they alter the steady-state levels of certain transcription factors in response to various physiological cues. Second, they modulate the activity of certain epigenetic modifiers, such as histone deacetylases or DNA methyl transferases, and thereby respond to the change in the environment. Third, they participate in the eviction of histones from the promoter region of certain genes and thereby turn on gene expression. Binds bacterial lipopolysaccharide (LPS) and mediates LPS-induced inflammatory response, including TNF secretion by monocytes. Antagonizes STUB1-mediated inhibition of TGF-beta signaling via inhibition of STUB1-mediated SMAD3 ubiquitination and degradation. Mediates the association of TOMM70 with IRF3 or TBK1 in mitochondrial outer membrane which promotes host antiviral response. In Oryctolagus cuniculus (Rabbit), this protein is Heat shock protein HSP 90-alpha (HSP90AA1).